We begin with the raw amino-acid sequence, 238 residues long: Ribitol-5-phosphate cytidylyltransferase 2 (238 aa).

Residues 7–10 (LAGG) and 81–87 (GTDRNET) contribute to the CTP site.

The protein belongs to the IspD/TarI cytidylyltransferase family. TarI subfamily.

The catalysed reaction is D-ribitol 5-phosphate + CTP + H(+) = CDP-L-ribitol + diphosphate. The protein operates within cell wall biogenesis; poly(ribitol phosphate) teichoic acid biosynthesis. Its function is as follows. Catalyzes the transfer of the cytidylyl group of CTP to D-ribitol 5-phosphate. This chain is Ribitol-5-phosphate cytidylyltransferase 2, found in Staphylococcus aureus (strain MRSA252).